A 308-amino-acid chain; its full sequence is Porphobilinogen deaminase (308 aa).

An S-(dipyrrolylmethanemethyl)cysteine modification is found at Cys-241.

It belongs to the HMBS family. As to quaternary structure, monomer. The cofactor is dipyrromethane.

It carries out the reaction 4 porphobilinogen + H2O = hydroxymethylbilane + 4 NH4(+). It participates in porphyrin-containing compound metabolism; protoporphyrin-IX biosynthesis; coproporphyrinogen-III from 5-aminolevulinate: step 2/4. Functionally, tetrapolymerization of the monopyrrole PBG into the hydroxymethylbilane pre-uroporphyrinogen in several discrete steps. This Staphylococcus carnosus (strain TM300) protein is Porphobilinogen deaminase.